The following is a 560-amino-acid chain: N-acetylglucosamine-6-sulfatase (560 aa).

The disordered stretch occupies residues 1–25; it reads MRLLSLAPDRPRRGGPRHLTSGSPA. Positions 1–48 are cleaved as a signal peptide; that stretch reads MRLLSLAPDRPRRGGPRHLTSGSPALPPPPPLLLLLLLLGGCLGVSGA. Residues aspartate 63, aspartate 64, and cysteine 99 each contribute to the Ca(2+) site. Residue cysteine 99 is the Nucleophile of the active site. Cysteine 99 is subject to 3-oxoalanine (Cys). Asparagine 119, asparagine 125, asparagine 191, asparagine 206, asparagine 218, asparagine 287, and asparagine 325 each carry an N-linked (GlcNAc...) asparagine glycan. Aspartate 334 and asparagine 335 together coordinate Ca(2+). Asparagine 370, asparagine 395, asparagine 413, asparagine 430, asparagine 457, and asparagine 488 each carry an N-linked (GlcNAc...) asparagine glycan. Residue serine 549 is modified to Phosphoserine.

The protein belongs to the sulfatase family. The cofactor is Ca(2+). The conversion to 3-oxoalanine (also known as C-formylglycine, FGly), of a serine or cysteine residue in prokaryotes and of a cysteine residue in eukaryotes, is critical for catalytic activity.

It localises to the lysosome. The catalysed reaction is Hydrolysis of the 6-sulfate groups of the N-acetyl-D-glucosamine 6-sulfate units of heparan sulfate and keratan sulfate.. In terms of biological role, hydrolyzes 6-sulfate groups in N-acetyl-d-glucosaminide units of heparin sulfate and keratan sulfate. The sequence is that of N-acetylglucosamine-6-sulfatase (GNS) from Bos taurus (Bovine).